The chain runs to 264 residues: MTSLPIILASSPLRNLTKPCSTSQIPKPIQNSTKQPPIHLLTKTNLSVTISQLIITSPVLASESFDSISSDPSSGKIDLESILVTIDNFFNKYPFFVAGCTFTYLVVYPAVMFYLRKYKPISAMNAFRKLKNESDSQLLDIRDVKTLALLASPNLKFLGKSSVQVPFSENDEEGFLTKVKGSFSDAENTVVCVLDNFDGNSSKVAELLIKNGFKEAYYIRGGARGKNGWLAIQEELLPPPVHMYTAKNVKSSNNNEASVVGTEN.

The N-terminal 60 residues, 1 to 60, are a transit peptide targeting the chloroplast; it reads MTSLPIILASSPLRNLTKPCSTSQIPKPIQNSTKQPPIHLLTKTNLSVTISQLIITSPVL. A helical transmembrane segment spans residues 95 to 115; it reads FFVAGCTFTYLVVYPAVMFYL. Residues 132 to 232 enclose the Rhodanese domain; it reads NESDSQLLDI…ARGKNGWLAI (101 aa).

The protein resides in the plastid. It is found in the chloroplast. It localises to the membrane. In Arabidopsis thaliana (Mouse-ear cress), this protein is Rhodanese-like domain-containing protein 4A, chloroplastic (STR4A).